A 188-amino-acid chain; its full sequence is NADH-quinone oxidoreductase subunit B 1 (188 aa).

Residues cysteine 32, cysteine 33, cysteine 98, and cysteine 128 each contribute to the [4Fe-4S] cluster site. Positions valine 153–serine 188 are disordered. Positions serine 157–leucine 177 are enriched in low complexity.

Belongs to the complex I 20 kDa subunit family. In terms of assembly, NDH-1 is composed of 14 different subunits. Subunits NuoB, C, D, E, F, and G constitute the peripheral sector of the complex. [4Fe-4S] cluster is required as a cofactor.

Its subcellular location is the cell membrane. It carries out the reaction a quinone + NADH + 5 H(+)(in) = a quinol + NAD(+) + 4 H(+)(out). NDH-1 shuttles electrons from NADH, via FMN and iron-sulfur (Fe-S) centers, to quinones in the respiratory chain. The immediate electron acceptor for the enzyme in this species is believed to be a menaquinone. Couples the redox reaction to proton translocation (for every two electrons transferred, four hydrogen ions are translocated across the cytoplasmic membrane), and thus conserves the redox energy in a proton gradient. This Salinispora tropica (strain ATCC BAA-916 / DSM 44818 / JCM 13857 / NBRC 105044 / CNB-440) protein is NADH-quinone oxidoreductase subunit B 1 (nuoB1).